The chain runs to 360 residues: Phosphoserine aminotransferase (360 aa).

Residue arginine 42 coordinates L-glutamate. The pyridoxal 5'-phosphate site is built by tryptophan 102, threonine 152, aspartate 171, and glutamine 194. Lysine 195 bears the N6-(pyridoxal phosphate)lysine mark. 237–238 (NT) is a pyridoxal 5'-phosphate binding site.

Belongs to the class-V pyridoxal-phosphate-dependent aminotransferase family. SerC subfamily. Homodimer. The cofactor is pyridoxal 5'-phosphate.

The protein resides in the cytoplasm. The catalysed reaction is O-phospho-L-serine + 2-oxoglutarate = 3-phosphooxypyruvate + L-glutamate. The enzyme catalyses 4-(phosphooxy)-L-threonine + 2-oxoglutarate = (R)-3-hydroxy-2-oxo-4-phosphooxybutanoate + L-glutamate. It participates in amino-acid biosynthesis; L-serine biosynthesis; L-serine from 3-phospho-D-glycerate: step 2/3. Its pathway is cofactor biosynthesis; pyridoxine 5'-phosphate biosynthesis; pyridoxine 5'-phosphate from D-erythrose 4-phosphate: step 3/5. In terms of biological role, catalyzes the reversible conversion of 3-phosphohydroxypyruvate to phosphoserine and of 3-hydroxy-2-oxo-4-phosphonooxybutanoate to phosphohydroxythreonine. The protein is Phosphoserine aminotransferase of Coxiella burnetii (strain RSA 493 / Nine Mile phase I).